Here is an 872-residue protein sequence, read N- to C-terminus: MVANGHFAGVGDVLDAKNYEHGVQVIDEEKEFNPNLSNYLSYENVTPAGFNYHLISVFGSQSTGKSTLLNSLFGTHFSVMSETERRQTTKGIWLSKNKRLKSDKGQDNQTKMADNILVMDVEGTDGRERGEDQDFERKSALFALATSEVLIVNIWEHQVGLYQGANMGLLKTVFEVNLELFLKDKRSNPRSLLFFVIRDFLGTTPLQNLQNTLLQDLNRIWNSLSKPAGLENSSITDYFDFAFAGLPHKNFQPEKFVDEVRKLSTRFCDGHRDPNKTDAKGTGSIEGGIFLPEYHRRIPADGFAVYAEGIWDQIVNNKDLDLPTQQELLAQFRCDEISREVLVAFDEAISPFEAKQAEAVQAGNPQVLGGLGSAMCNARMKSVKNFDTEASRYHKRVYQMKKSELQDKIDSRLKALFLGQLSAAHRSGIQEFTESVTAAVKAGQKRGASYDFAEIVTKERKLAIEKFEKEARAAVVEDTQWSNYQQELSLYQKDLENIGGQLRRDEMRRLATRVGRWVRSRLGESIDLEFNAIGSGRGGSGAPEFGDKPSEKSLWDRVWTLFVDTVLDAERRFTERASSFDASIDEVDVGLWRLRRKSWGVLRAKIDEEMMEGNILLKLRENFEDKFRYDDAGVPRIWRPNDDIESIYTRARESTLTLIPLLSRFRLAETNAPPPLDKWIGHTPSSATPADEEDLTPIGGVDEDEGKSLEEEMTMIGEAKKQDLTVRFKKTADGVYVEAKRSAIGGITQVPLYFYGLLLALGWNEIVAVLRNPAYFLLLFVCAVTAYVTYQLNLWGPIIKMTEAASQQALMEGKTRLREFLEASDTGLQAMAMSKGRNAEEYDMSNMKNRKSAGGFQNNRSHIDDADDDDDF.

The Cytoplasmic portion of the chain corresponds to 1 to 749 (MVANGHFAGV…KRSAIGGITQ (749 aa)). Residues 49-307 (GFNYHLISVF…IPADGFAVYA (259 aa)) form the GB1/RHD3-type G domain. 59–66 (GSQSTGKS) provides a ligand contact to GTP. A coiled-coil region spans residues 482 to 504 (SNYQQELSLYQKDLENIGGQLRR). Residues 676–704 (LDKWIGHTPSSATPADEEDLTPIGGVDED) are disordered. Residues 690 to 704 (ADEEDLTPIGGVDED) show a composition bias toward acidic residues. A helical transmembrane segment spans residues 750–770 (VPLYFYGLLLALGWNEIVAVL). The Lumenal segment spans residues 771–773 (RNP). A helical transmembrane segment spans residues 774–794 (AYFLLLFVCAVTAYVTYQLNL). At 795 to 872 (WGPIIKMTEA…IDDADDDDDF (78 aa)) the chain is on the cytoplasmic side. The tract at residues 849–872 (NRKSAGGFQNNRSHIDDADDDDDF) is disordered.

It belongs to the TRAFAC class dynamin-like GTPase superfamily. GB1/RHD3 GTPase family. RHD3 subfamily.

It localises to the endoplasmic reticulum membrane. In terms of biological role, cooperates with the reticulon proteins and tubule-shaping DP1 family proteins to generate and maintain the structure of the tubular endoplasmic reticulum network. Has GTPase activity, which is required for its function in ER organization. This chain is Protein SEY1, found in Paracoccidioides brasiliensis (strain Pb18).